Reading from the N-terminus, the 163-residue chain is NADH-quinone oxidoreductase subunit I (163 aa).

2 4Fe-4S ferredoxin-type domains span residues 53–83 (LRRY…IEAG) and 94–123 (VRYD…EGPN). [4Fe-4S] cluster-binding residues include cysteine 63, cysteine 66, cysteine 69, cysteine 73, cysteine 103, cysteine 106, cysteine 109, and cysteine 113.

It belongs to the complex I 23 kDa subunit family. As to quaternary structure, NDH-1 is composed of 14 different subunits. Subunits NuoA, H, J, K, L, M, N constitute the membrane sector of the complex. It depends on [4Fe-4S] cluster as a cofactor.

It is found in the cell inner membrane. It catalyses the reaction a quinone + NADH + 5 H(+)(in) = a quinol + NAD(+) + 4 H(+)(out). In terms of biological role, NDH-1 shuttles electrons from NADH, via FMN and iron-sulfur (Fe-S) centers, to quinones in the respiratory chain. The immediate electron acceptor for the enzyme in this species is believed to be ubiquinone. Couples the redox reaction to proton translocation (for every two electrons transferred, four hydrogen ions are translocated across the cytoplasmic membrane), and thus conserves the redox energy in a proton gradient. In Agrobacterium fabrum (strain C58 / ATCC 33970) (Agrobacterium tumefaciens (strain C58)), this protein is NADH-quinone oxidoreductase subunit I.